Here is a 402-residue protein sequence, read N- to C-terminus: Triose phosphate/phosphate translocator, non-green plastid, chloroplastic (402 aa).

A chloroplast-targeting transit peptide spans 1 to 82 (MQSSAVFSAS…SLDTNRFKTA (82 aa)). Topologically, residues 83–98 (ATAVPEEGEGSGKMTK) are chloroplast intermembrane. Residues 99–119 (VLELGLLFAMWYLFNIYFNIY) form a helical membrane-spanning segment. The EamA domain maps to 118–236 (IYNKQVLKAL…IVGGVALASV (119 aa)). At 120–131 (NKQVLKALHAPM) the chain is on the lumenal side. A helical membrane pass occupies residues 132 to 152 (TVTLVQFAVGSVLITFMWALN). Residues 153–209 (LYKRPKISAAQLAAILPLAVVHTLGNLFTNMSLGKVSVSFTHTIKAMEPFFSVVLSA) are Chloroplast intermembrane-facing. The chain crosses the membrane as a helical span at residues 210-230 (MFLGEVPTPWVIGSIIPIVGG). At 231–278 (VALASVTEVSFNWAGFLSAMASNLTNQSRNVLSKKVMVKKDDSLDNIT) the chain is on the lumenal side. Residues 279-298 (LFSIITLMSLFLMAPVTFFS) form a helical membrane-spanning segment. Topologically, residues 299-374 (EGIKFTPSYI…IFFKTPVSPV (76 aa)) are chloroplast intermembrane. Residues 375–394 (NAFGTGIALAGVFLYSRVKR) form a helical membrane-spanning segment. Over 395-402 (IKPKPKTA) the chain is Lumenal.

This sequence belongs to the TPT transporter family. TPT (TC 2.A.7.9) subfamily. As to quaternary structure, homodimer.

It localises to the plastid. The protein localises to the chloroplast membrane. Mediates the export of fixed carbons from the chloroplasts into the cytosol in the form of triose phosphates. The polypeptide is Triose phosphate/phosphate translocator, non-green plastid, chloroplastic (NGTPT) (Brassica oleracea var. botrytis (Cauliflower)).